Here is a 120-residue protein sequence, read N- to C-terminus: Non-specific lipid-transfer protein 2 (120 aa).

Residues 1–25 (MATSMKLACVALVMCMVVIAPMAEA) form the signal peptide. 4 disulfides stabilise this stretch: Cys29–Cys78, Cys39–Cys55, Cys56–Cys101, and Cys76–Cys115.

It belongs to the plant LTP family. As to expression, expressed in roots, stem, leaves and tendrils of the mature plant.

Functionally, plant non-specific lipid-transfer proteins transfer phospholipids as well as galactolipids across membranes. May play a role in wax or cutin deposition in the cell walls of expanding epidermal cells and certain secretory tissues. The polypeptide is Non-specific lipid-transfer protein 2 (Pisum sativum (Garden pea)).